The chain runs to 212 residues: Endonuclease III (212 aa).

The HhH domain occupies 108-127 (FKELVKLPGVGRKTANVVLN). Residues cysteine 187, cysteine 194, cysteine 197, and cysteine 203 each coordinate [4Fe-4S] cluster.

The protein belongs to the Nth/MutY family. It depends on [4Fe-4S] cluster as a cofactor.

It catalyses the reaction 2'-deoxyribonucleotide-(2'-deoxyribose 5'-phosphate)-2'-deoxyribonucleotide-DNA = a 3'-end 2'-deoxyribonucleotide-(2,3-dehydro-2,3-deoxyribose 5'-phosphate)-DNA + a 5'-end 5'-phospho-2'-deoxyribonucleoside-DNA + H(+). DNA repair enzyme that has both DNA N-glycosylase activity and AP-lyase activity. The DNA N-glycosylase activity releases various damaged pyrimidines from DNA by cleaving the N-glycosidic bond, leaving an AP (apurinic/apyrimidinic) site. The AP-lyase activity cleaves the phosphodiester bond 3' to the AP site by a beta-elimination, leaving a 3'-terminal unsaturated sugar and a product with a terminal 5'-phosphate. This is Endonuclease III from Rickettsia prowazekii (strain Madrid E).